A 295-amino-acid polypeptide reads, in one-letter code: Cytidine deaminase (295 aa).

CMP/dCMP-type deaminase domains lie at 48 to 168 and 187 to 295; these read ADDE…FGPA and EETT…YLAI. 89-91 lines the substrate pocket; it reads NLE. Zn(2+) is bound at residue His-102. Glu-104 serves as the catalytic Proton donor. 2 residues coordinate Zn(2+): Cys-129 and Cys-132.

Belongs to the cytidine and deoxycytidylate deaminase family. Homodimer. It depends on Zn(2+) as a cofactor.

The enzyme catalyses cytidine + H2O + H(+) = uridine + NH4(+). It catalyses the reaction 2'-deoxycytidine + H2O + H(+) = 2'-deoxyuridine + NH4(+). This enzyme scavenges exogenous and endogenous cytidine and 2'-deoxycytidine for UMP synthesis. This chain is Cytidine deaminase, found in Vibrio atlanticus (strain LGP32) (Vibrio splendidus (strain Mel32)).